The following is a 271-amino-acid chain: DNA-binding protein HEXBP (271 aa).

2 stretches are compositionally biased toward basic and acidic residues: residues 1–12 (MSETEDVKRPRT) and 21–42 (CGKEGHYARECPEADSKGDERS). Positions 1 to 42 (MSETEDVKRPRTESSTSCRNCGKEGHYARECPEADSKGDERS) are disordered. CCHC-type zinc fingers lie at residues 16–33 (TSCRNCGKEGHYARECPE), 43–60 (TTCFRCGEEGHMSRECPN), 70–87 (MTCFRCGEAGHMSRDCPN), and 97–114 (FECYKCGQEGHLSRDCPS). The disordered stretch occupies residues 107–136 (HLSRDCPSSQGGSRGGYGQKRGRSGAQGGY). Residues 118 to 136 (GSRGGYGQKRGRSGAQGGY) show a composition bias toward gly residues. 5 CCHC-type zinc fingers span residues 140-157 (RTCYKCGDAGHISRDCPN), 168-185 (RTCYKCGDAGHISRDCPN), 196-213 (RKCYKCGESGHMSRECPS), 222-239 (RACYKCGKPGHISRECPE), and 253-270 (RTCYKCGEAGHISRDCPS).

The protein localises to the nucleus. Binds to single-stranded DNA located in the 5' hexanucleotide repeat region of the L.major leishmanolysin (GP63) gene. In Leishmania major, this protein is DNA-binding protein HEXBP (HEXBP).